The sequence spans 403 residues: CCA-adding enzyme (403 aa).

ATP contacts are provided by Gly32 and Arg35. Gly32 and Arg35 together coordinate CTP. 2 residues coordinate Mg(2+): Asp45 and Asp47. ATP is bound by residues Arg116, Asp159, Arg162, Arg165, and Arg168. 5 residues coordinate CTP: Arg116, Asp159, Arg162, Arg165, and Arg168.

Belongs to the tRNA nucleotidyltransferase/poly(A) polymerase family. Bacterial CCA-adding enzyme type 3 subfamily. Homodimer. Requires Mg(2+) as cofactor.

It carries out the reaction a tRNA precursor + 2 CTP + ATP = a tRNA with a 3' CCA end + 3 diphosphate. It catalyses the reaction a tRNA with a 3' CCA end + 2 CTP + ATP = a tRNA with a 3' CCACCA end + 3 diphosphate. Its function is as follows. Catalyzes the addition and repair of the essential 3'-terminal CCA sequence in tRNAs without using a nucleic acid template. Adds these three nucleotides in the order of C, C, and A to the tRNA nucleotide-73, using CTP and ATP as substrates and producing inorganic pyrophosphate. tRNA 3'-terminal CCA addition is required both for tRNA processing and repair. Also involved in tRNA surveillance by mediating tandem CCA addition to generate a CCACCA at the 3' terminus of unstable tRNAs. While stable tRNAs receive only 3'-terminal CCA, unstable tRNAs are marked with CCACCA and rapidly degraded. This Streptococcus suis (strain 98HAH33) protein is CCA-adding enzyme.